The chain runs to 60 residues: UPF0434 protein NMC0623 (60 aa).

This sequence belongs to the UPF0434 family.

The protein is UPF0434 protein NMC0623 of Neisseria meningitidis serogroup C / serotype 2a (strain ATCC 700532 / DSM 15464 / FAM18).